The following is a 178-amino-acid chain: Large ribosomal subunit protein uL5 (178 aa).

It belongs to the universal ribosomal protein uL5 family. In terms of assembly, part of the 50S ribosomal subunit; contacts the 5S rRNA and probably tRNA. Forms a bridge to the 30S subunit in the 70S ribosome.

Its function is as follows. This is one of the proteins that bind and probably mediate the attachment of the 5S RNA into the large ribosomal subunit, where it forms part of the central protuberance. In the 70S ribosome it contacts protein S13 of the 30S subunit (bridge B1b), connecting the 2 subunits; this bridge is implicated in subunit movement. May contact the P site tRNA; the 5S rRNA and some of its associated proteins might help stabilize positioning of ribosome-bound tRNAs. The sequence is that of Large ribosomal subunit protein uL5 from Sulfolobus acidocaldarius (strain ATCC 33909 / DSM 639 / JCM 8929 / NBRC 15157 / NCIMB 11770).